The chain runs to 445 residues: Methyl-CpG-binding domain protein 4-like protein (445 aa).

The active site involves D429.

Isoform 1 and isoform 4: Expressed in leaves and flowers, but not in roots or stems.

Its subcellular location is the nucleus. Its function is as follows. Monofunctional DNA glycosylase targeting U:G and T:G mispairs. Excises uracil derivatives and exhibits a preference for a CpG sequence context, irrespective of the methylation status of the complementary strand. The activity follows a biphasic kinetics, with an initial burst of product accumulation followed by a slower phase. Specifically binds its reaction product. Triggers the base excision repair (BER) pathway. The protein is Methyl-CpG-binding domain protein 4-like protein of Arabidopsis thaliana (Mouse-ear cress).